Consider the following 209-residue polypeptide: Nucleoside triphosphate pyrophosphatase (209 aa).

Residue Asp74 is the Proton acceptor of the active site.

It belongs to the Maf family. A divalent metal cation is required as a cofactor.

It localises to the cytoplasm. It catalyses the reaction a ribonucleoside 5'-triphosphate + H2O = a ribonucleoside 5'-phosphate + diphosphate + H(+). It carries out the reaction a 2'-deoxyribonucleoside 5'-triphosphate + H2O = a 2'-deoxyribonucleoside 5'-phosphate + diphosphate + H(+). Functionally, nucleoside triphosphate pyrophosphatase. May have a dual role in cell division arrest and in preventing the incorporation of modified nucleotides into cellular nucleic acids. This is Nucleoside triphosphate pyrophosphatase from Neorickettsia sennetsu (strain ATCC VR-367 / Miyayama) (Ehrlichia sennetsu).